Reading from the N-terminus, the 120-residue chain is Large ribosomal subunit protein bL19 (120 aa).

The protein belongs to the bacterial ribosomal protein bL19 family.

Its function is as follows. This protein is located at the 30S-50S ribosomal subunit interface and may play a role in the structure and function of the aminoacyl-tRNA binding site. The protein is Large ribosomal subunit protein bL19 of Acaryochloris marina (strain MBIC 11017).